The sequence spans 314 residues: DNA-directed RNA polymerase subunit alpha (314 aa).

Positions 1–228 (MAQFQIECVE…NLFIPLKDLN (228 aa)) are alpha N-terminal domain (alpha-NTD). Positions 243–314 (PESQIPIEEL…ITLPHEKAKA (72 aa)) are alpha C-terminal domain (alpha-CTD).

This sequence belongs to the RNA polymerase alpha chain family. Homodimer. In cyanobacteria the RNAP catalytic core is composed of 2 alpha, 1 beta, 1 beta', 1 gamma and 1 omega subunit. When a sigma factor is associated with the core the holoenzyme is formed, which can initiate transcription.

It carries out the reaction RNA(n) + a ribonucleoside 5'-triphosphate = RNA(n+1) + diphosphate. DNA-dependent RNA polymerase catalyzes the transcription of DNA into RNA using the four ribonucleoside triphosphates as substrates. In Synechocystis sp. (strain ATCC 27184 / PCC 6803 / Kazusa), this protein is DNA-directed RNA polymerase subunit alpha.